A 160-amino-acid polypeptide reads, in one-letter code: 6,7-dimethyl-8-ribityllumazine synthase (160 aa).

5-amino-6-(D-ribitylamino)uracil contacts are provided by residues F23, 61–63 (SFE), and 85–87 (AVI). 90 to 91 (DT) contributes to the (2S)-2-hydroxy-3-oxobutyl phosphate binding site. The Proton donor role is filled by H93. A 5-amino-6-(D-ribitylamino)uracil-binding site is contributed by F118. (2S)-2-hydroxy-3-oxobutyl phosphate is bound at residue R132.

This sequence belongs to the DMRL synthase family.

It carries out the reaction (2S)-2-hydroxy-3-oxobutyl phosphate + 5-amino-6-(D-ribitylamino)uracil = 6,7-dimethyl-8-(1-D-ribityl)lumazine + phosphate + 2 H2O + H(+). Its pathway is cofactor biosynthesis; riboflavin biosynthesis; riboflavin from 2-hydroxy-3-oxobutyl phosphate and 5-amino-6-(D-ribitylamino)uracil: step 1/2. In terms of biological role, catalyzes the formation of 6,7-dimethyl-8-ribityllumazine by condensation of 5-amino-6-(D-ribitylamino)uracil with 3,4-dihydroxy-2-butanone 4-phosphate. This is the penultimate step in the biosynthesis of riboflavin. The polypeptide is 6,7-dimethyl-8-ribityllumazine synthase (Synechococcus sp. (strain CC9605)).